A 268-amino-acid polypeptide reads, in one-letter code: Tryptophan synthase alpha chain (268 aa).

Residues Glu49 and Asp60 each act as proton acceptor in the active site.

It belongs to the TrpA family. Tetramer of two alpha and two beta chains.

It carries out the reaction (1S,2R)-1-C-(indol-3-yl)glycerol 3-phosphate + L-serine = D-glyceraldehyde 3-phosphate + L-tryptophan + H2O. It functions in the pathway amino-acid biosynthesis; L-tryptophan biosynthesis; L-tryptophan from chorismate: step 5/5. In terms of biological role, the alpha subunit is responsible for the aldol cleavage of indoleglycerol phosphate to indole and glyceraldehyde 3-phosphate. The polypeptide is Tryptophan synthase alpha chain (Photorhabdus laumondii subsp. laumondii (strain DSM 15139 / CIP 105565 / TT01) (Photorhabdus luminescens subsp. laumondii)).